The primary structure comprises 51 residues: Large ribosomal subunit protein eL39 (51 aa).

This sequence belongs to the eukaryotic ribosomal protein eL39 family.

In Methanothermobacter thermautotrophicus (strain ATCC 29096 / DSM 1053 / JCM 10044 / NBRC 100330 / Delta H) (Methanobacterium thermoautotrophicum), this protein is Large ribosomal subunit protein eL39 (rpl39e).